The chain runs to 432 residues: MHIAVVGLSHRTAPVEIRERLSIPEQSMEMSLKTLRGNDQVLEASILSTCNRLEIYTLVRHPELGVGAVNEFLSNHSGLQTGELSPHLFNFHHQDAVDHLLRVAAGLDSLVLGEGQILSQVKKMMRLGQEHKSLGPILNRLLTQAVTTGKKVRSETNLGTGAVSISSAAVELAQLKLGQSRGVDDLVSLESEQIAVVGAGRMSRLLLQHLQAKGASGVVLVNRTVETAERLANDFPDLSVECRPLTDLNTFLSTSSLVFTSTAAEDPIIDASRLKPLNRRSQLRLIDIGVPRNVAADAATVDGVESHDVDDLEEVVARNQEARQAIAREAEHLLQDEAQQFLDWWDSLEAVPTINQLRSSMETIRTEELQKALSRMGPDFSARERKVVEALSKGIINKILHTPVTKLRASQARSERQQALRAVERLFDLDPS.

Substrate contacts are provided by residues 49-52, serine 109, 114-116, and glutamine 120; these read TCNR and EGQ. Catalysis depends on cysteine 50, which acts as the Nucleophile. Residue 198–203 participates in NADP(+) binding; that stretch reads GAGRMS.

It belongs to the glutamyl-tRNA reductase family. Homodimer.

It catalyses the reaction (S)-4-amino-5-oxopentanoate + tRNA(Glu) + NADP(+) = L-glutamyl-tRNA(Glu) + NADPH + H(+). Its pathway is porphyrin-containing compound metabolism; protoporphyrin-IX biosynthesis; 5-aminolevulinate from L-glutamyl-tRNA(Glu): step 1/2. The protein operates within porphyrin-containing compound metabolism; chlorophyll biosynthesis. Catalyzes the NADPH-dependent reduction of glutamyl-tRNA(Glu) to glutamate 1-semialdehyde (GSA). This is Glutamyl-tRNA reductase from Synechococcus sp. (strain CC9902).